The chain runs to 540 residues: Phosphoenolpyruvate carboxykinase (ATP) (540 aa).

R65 contributes to the substrate binding site. K87 carries the N6-acetyllysine modification. Substrate contacts are provided by Y207 and K213. ATP-binding positions include K213, H232, and 248–256 (GLSGTGKTT). Residues K213 and H232 each coordinate Mn(2+). Position 269 (D269) interacts with Mn(2+). Residues E297, R333, 449–450 (RI), and T455 each bind ATP. A substrate-binding site is contributed by R333. At K523 the chain carries N6-acetyllysine.

Belongs to the phosphoenolpyruvate carboxykinase (ATP) family. In terms of assembly, monomer. It depends on Mn(2+) as a cofactor.

Its subcellular location is the cytoplasm. The catalysed reaction is oxaloacetate + ATP = phosphoenolpyruvate + ADP + CO2. It functions in the pathway carbohydrate biosynthesis; gluconeogenesis. In terms of biological role, involved in the gluconeogenesis. Catalyzes the conversion of oxaloacetate (OAA) to phosphoenolpyruvate (PEP) through direct phosphoryl transfer between the nucleoside triphosphate and OAA. This is Phosphoenolpyruvate carboxykinase (ATP) from Escherichia coli O6:H1 (strain CFT073 / ATCC 700928 / UPEC).